The chain runs to 321 residues: Polyprenyl transferase cle5 (321 aa).

The next 9 membrane-spanning stretches (helical) occupy residues 26–46, 57–77, 107–127, 132–149, 159–179, 189–209, 232–252, 262–282, and 300–320; these read PLLATFSGVWATILAGSHKIT, VLSQALLCFICSFVFCGAGMV, EALVWMAFQFISSWVLVSWML, VQAAMLPVTLSTILYPFA, IYPQYLLGFTLAYPSLIGTLA, LWASINQSLPMFVTVFTWTLY, VLAGSYIHHLLVVLAVLVLGA, SQWLWGGWMGVWTWSFLGQLV, and FALGVWTVFVCVVELLIGGNG.

The protein belongs to the UbiA prenyltransferase family. Requires Mg(2+) as cofactor.

The protein localises to the membrane. Its pathway is secondary metabolite biosynthesis; terpenoid biosynthesis. In terms of biological role, polyprenyl transferase; part of the cluster A that mediates the biosynthesis of chevalone E and its oxidized derivatives that possess a unique five-membered lactone ring and can synergistically enhance the cytotoxicity of doxorubicin (DOX) in breast cancer cells. Within the pathway, cle5 takes part to the biosynthesis of the molecular scaffold by catalyzing the C-3 geranylgeranylation reaction of triacetic acid lactone (TAL) produced by cle1. The molecular scaffold is commonly biosynthesized by a series of enzymes including the non-reducing polyketide synthase (NR-PKS) cle1 that produces the alpha-pyrone triacetic acid lactone (TAL); The membrane-bound prenyltransferase cle5 that accepts TAL as its substrate to perform a C-3 geranylgeranylation reaction, in which the pathway-dedicated GGPS cle6 is required to provide GGPP, the other substrate of cle5; the FAD-dependent monooxygenase Cle3 that forms an (S)-epoxide ring at the terminal olefin of the geranylgeranyl group; and the terpene cyclase Cle7 that catalyzes the cyclization of the prenyl group that yields the pentacyclic pathway intermediate chevalone E. Chevalone E can derivatize into seven new oxidized analogs by the cytochrome P450 monooxygenases cle2 (acting at C-20) and cle4 (acting at C-11 and C-12). The protein is Polyprenyl transferase cle5 of Aspergillus versicolor.